The primary structure comprises 1032 residues: Structural polyprotein (1032 aa).

A divalent metal cation is bound at residue aspartate 23. One can recognise a Peptidase S50 domain in the interval 501 to 723 (ADSPLGEEHW…QTLPHWTAGS (223 aa)). The active-site Nucleophile is the serine 627. Lysine 670 is a catalytic residue. Positions 986–1014 (LVNQPATAPRVPPRRIVSAQTAQTDPPGR) are disordered. The tract at residues 1021 to 1030 (LRRVRGEDND) is interaction with VP1 protein.

Homotrimer. A central divalent metal stabilizes the VP2 trimer. In terms of assembly, homodimer. Interacts (via C-terminus) with VP1 in the cytoplasm. Capsid VP3 interacts with VP2. Post-translationally, specific enzymatic cleavages yield mature proteins. The capsid assembly seems to be regulated by polyprotein processing. The protease VP4 cleaves itself off the polyprotein, thus releasing pre-VP2 and VP3 within the infected cell. During capsid assembly, the C-terminus of pre-VP2 is further processed by VP4, giving rise to VP2, the external capsid protein and three small peptides that all stay closely associated with the capsid.

The protein resides in the virion. It localises to the host cytoplasm. Its function is as follows. Capsid protein VP2 self assembles to form an icosahedral capsid with a T=13 symmetry, about 70 nm in diameter, and consisting of 260 VP2 trimers. The capsid encapsulates the genomic dsRNA. VP2 is also involved in attachment and entry into the host cell. Functionally, the precursor of VP2 plays an important role in capsid assembly. First, pre-VP2 and VP2 oligomers assemble to form a procapsid. Then, the pre-VP2 intermediates may be processed into VP2 proteins by proteolytic cleavage mediated by VP4 to obtain the mature virion. The final capsid is composed of pentamers and hexamers but VP2 has a natural tendency to assemble into all-pentameric structures. Therefore pre-VP2 may be required to allow formation of the hexameric structures. In terms of biological role, protease VP4 is a serine protease that cleaves the polyprotein into its final products. Pre-VP2 is first partially cleaved, and may be completely processed by VP4 upon capsid maturation. Capsid protein VP3 plays a key role in virion assembly by providing a scaffold for the capsid made of VP2. May self-assemble to form a T=4-like icosahedral inner-capsid composed of at least 180 trimers. Plays a role in genomic RNA packaging by recruiting VP1 into the capsid and interacting with the dsRNA genome segments to form a ribonucleoprotein complex. Additionally, the interaction of the VP3 C-terminal tail with VP1 removes the inherent structural blockade of the polymerase active site. Thus, VP3 can also function as a transcriptional activator. Its function is as follows. Structural peptide 1 is a small peptide derived from pre-VP2 C-terminus. It destabilizes and perforates cell membranes, suggesting a role during entry. Functionally, structural peptide 2 is a small peptide derived from pre-VP2 C-terminus. It is not essential for the virus viability, but viral growth is affected when missing. In terms of biological role, structural peptide 3 is a small peptide derived from pre-VP2 C-terminus. It is not essential for the virus viability, but viral growth is affected when missing. The polypeptide is Structural polyprotein (Drosophila melanogaster (Fruit fly)).